The primary structure comprises 439 residues: Skin secretory protein xP2 (439 aa).

An N-terminal signal peptide occupies residues 1-22 (MNHKLFCVHFLLLILSVCYIQG). Residues 25-351 (AGGEPAPAEG…VEVGPKTEDC (327 aa)) form a disordered region. 5 tandem repeats follow at residues 26-33 (GGEPAPAE), 34-41 (GVAPAPAE), 42-51 (GGAPAPAPAE), 52-59 (GEAPAPAE), and 60-69 (GGAPAPAPAE). Positions 26–343 (GGEPAPAEGV…APAPAPAPVE (318 aa)) are 33 X approximate repeats of G-G(0,1)-[EV](0,1)-A-P-[A-P](1,3)-A-E. A compositionally biased stretch (low complexity) spans 26–345 (GGEPAPAEGV…APAPAPVEVG (320 aa)). The 6; approximate repeat unit spans residues 70–77 (GAEPAPAD). 9 tandem repeats follow at residues 78 to 87 (GGAPAPAPAE), 88 to 97 (GGAPAPAPAE), 98 to 107 (GGAPAPAPAE), 108 to 115 (GGAPAPAE), 116 to 125 (GGAPAPAPAE), 126 to 135 (GEAPAPAPAE), 136 to 145 (GEAPAPAPAE), 146 to 153 (GEAPAPAE), and 154 to 163 (GEAPAPAPAE). One copy of the 16; approximate repeat lies at 164–173 (VEAPAPAPAE). A run of 14 repeats spans residues 174-183 (GEAPAPAPAE), 184-193 (GEAPAPAPAE), 194-203 (GEAPAPAPAE), 204-215 (GEAPAPAPAPAE), 216-225 (GEAPAPAPAE), 226-235 (GEAPAPAPAE), 236-245 (GEAPAPAPAE), 246-255 (GEAPAPAPAE), 256-265 (GEAPAPAPAE), 266-275 (GEAPAPAPAE), 276-285 (GEAPAPAPAE), 286-293 (GEAPAPAE), 294-303 (GEAPAPAPAE), and 304-313 (GEAPAPAPAE). One copy of the 31; approximate repeat lies at 314 to 321 (GGAPSPAE). A 32; approximate repeat occupies 322 to 331 (GGAPAAAPAE). The stretch at 332-343 (GGAPAPAPAPVE) is one 33; approximate repeat. P-type domains lie at 349–392 (EDCK…FFPR) and 396–439 (AQCL…FHQK). 6 disulfide bridges follow: Cys-351-Cys-377, Cys-361-Cys-376, Cys-371-Cys-388, Cys-398-Cys-424, Cys-408-Cys-423, and Cys-418-Cys-435.

Skin.

It localises to the secreted. May act as a growth factor in the germinal layer of the epidermis. May also be involved in growth of regenerating glands and in protection of the skin from the external environment. This is Skin secretory protein xP2 (p2) from Xenopus laevis (African clawed frog).